Reading from the N-terminus, the 461-residue chain is MNLQIIILAAGQGKRMYSDTPKVLHHLAGKPLLTHVVETAQQLNPDAIHVIYGHGGEQIKSSLPNLPVHWVHQAEQLGTGHAVLQAMPHIPDDAYVLVLSADVPLIQVGTLQSLIECSQRQNPDHSVLALLVAELENPSGLGRIIRNNQGEIYSIVEEKDANEQVKNIKEIYSGVCCTLANNLKKWLPQLSNSNAQGEYYLTEIISLAVQNKTPITSLTAKNSFEVQGINNRQQLQQLERTWQQRAANQLMEKGATLADANRFDLRGELYCGKDVYIDINCIFTGKVVLGNGCKIGPNCSLTNVTLGDGCEVYANSVLEGCHIANDCHIGPFARLRSGTQLASHCKIGNFVETKKAIFDEGTKASHLSYLGDVLLGKNVNVGAGTITCNYDGVNKHQTIIEDGVFIGSDTQLVAPVTVGANATIGAGSTIRRNVPPDELTLTESRQKTIYGWKRPVKRERD.

The segment at 1-232 (MNLQIIILAA…SFEVQGINNR (232 aa)) is pyrophosphorylase. UDP-N-acetyl-alpha-D-glucosamine-binding positions include 8–11 (LAAG), lysine 22, glutamine 73, and 78–79 (GT). Aspartate 102 contributes to the Mg(2+) binding site. Glycine 142, glutamate 157, and asparagine 230 together coordinate UDP-N-acetyl-alpha-D-glucosamine. Asparagine 230 contributes to the Mg(2+) binding site. The linker stretch occupies residues 233-253 (QQLQQLERTWQQRAANQLMEK). Residues 254 to 461 (GATLADANRF…WKRPVKRERD (208 aa)) are N-acetyltransferase. 2 residues coordinate UDP-N-acetyl-alpha-D-glucosamine: arginine 336 and lysine 354. Histidine 366 functions as the Proton acceptor in the catalytic mechanism. Residues tyrosine 369 and asparagine 380 each contribute to the UDP-N-acetyl-alpha-D-glucosamine site. Acetyl-CoA is bound by residues alanine 383, 389 to 390 (NY), serine 408, and alanine 426.

The protein in the N-terminal section; belongs to the N-acetylglucosamine-1-phosphate uridyltransferase family. In the C-terminal section; belongs to the transferase hexapeptide repeat family. In terms of assembly, homotrimer. Requires Mg(2+) as cofactor.

It is found in the cytoplasm. It catalyses the reaction alpha-D-glucosamine 1-phosphate + acetyl-CoA = N-acetyl-alpha-D-glucosamine 1-phosphate + CoA + H(+). The enzyme catalyses N-acetyl-alpha-D-glucosamine 1-phosphate + UTP + H(+) = UDP-N-acetyl-alpha-D-glucosamine + diphosphate. It functions in the pathway nucleotide-sugar biosynthesis; UDP-N-acetyl-alpha-D-glucosamine biosynthesis; N-acetyl-alpha-D-glucosamine 1-phosphate from alpha-D-glucosamine 6-phosphate (route II): step 2/2. The protein operates within nucleotide-sugar biosynthesis; UDP-N-acetyl-alpha-D-glucosamine biosynthesis; UDP-N-acetyl-alpha-D-glucosamine from N-acetyl-alpha-D-glucosamine 1-phosphate: step 1/1. Its pathway is bacterial outer membrane biogenesis; LPS lipid A biosynthesis. In terms of biological role, catalyzes the last two sequential reactions in the de novo biosynthetic pathway for UDP-N-acetylglucosamine (UDP-GlcNAc). The C-terminal domain catalyzes the transfer of acetyl group from acetyl coenzyme A to glucosamine-1-phosphate (GlcN-1-P) to produce N-acetylglucosamine-1-phosphate (GlcNAc-1-P), which is converted into UDP-GlcNAc by the transfer of uridine 5-monophosphate (from uridine 5-triphosphate), a reaction catalyzed by the N-terminal domain. The chain is Bifunctional protein GlmU from Legionella pneumophila (strain Paris).